The primary structure comprises 352 residues: uncharacterized protein (352 aa).

This is an uncharacterized protein from Frog virus 3 (isolate Goorha) (FV-3).